A 199-amino-acid polypeptide reads, in one-letter code: Recombination protein RecR (199 aa).

The segment at 58–73 (CLNCGNIGTSDICDIC) adopts a C4-type zinc-finger fold. The region spanning 81–176 (GEICVVEDVA…AVTSLAQGVP (96 aa)) is the Toprim domain.

This sequence belongs to the RecR family.

Functionally, may play a role in DNA repair. It seems to be involved in an RecBC-independent recombinational process of DNA repair. It may act with RecF and RecO. The sequence is that of Recombination protein RecR from Dinoroseobacter shibae (strain DSM 16493 / NCIMB 14021 / DFL 12).